Consider the following 429-residue polypeptide: Threonine synthase (429 aa).

The residue at position 108 (Lys108) is an N6-(pyridoxal phosphate)lysine.

This sequence belongs to the threonine synthase family. Pyridoxal 5'-phosphate is required as a cofactor.

The enzyme catalyses O-phospho-L-homoserine + H2O = L-threonine + phosphate. It participates in amino-acid biosynthesis; L-threonine biosynthesis; L-threonine from L-aspartate: step 5/5. Its function is as follows. Catalyzes the gamma-elimination of phosphate from L-phosphohomoserine and the beta-addition of water to produce L-threonine. In Buchnera aphidicola subsp. Acyrthosiphon pisum (strain APS) (Acyrthosiphon pisum symbiotic bacterium), this protein is Threonine synthase (thrC).